The following is a 301-amino-acid chain: D-alanine--D-alanine ligase (301 aa).

In terms of domain architecture, ATP-grasp spans 99–294 (KCILKAANIR…FPELIDMIID (196 aa)). Residue 126–181 (IEKMGYPVVVKPTHGGSSVATFIIKEEKDIKDAVIEGFKWDSEVIIEKFIKGDEIT) coordinates ATP. The Mg(2+) site is built by Asp248, Glu261, and Asn263.

It belongs to the D-alanine--D-alanine ligase family. Requires Mg(2+) as cofactor. Mn(2+) is required as a cofactor.

It is found in the cytoplasm. It catalyses the reaction 2 D-alanine + ATP = D-alanyl-D-alanine + ADP + phosphate + H(+). It functions in the pathway cell wall biogenesis; peptidoglycan biosynthesis. Its function is as follows. Cell wall formation. The sequence is that of D-alanine--D-alanine ligase from Clostridium botulinum (strain Alaska E43 / Type E3).